Consider the following 325-residue polypeptide: Cyclic AMP-responsive element-binding protein 1 (325 aa).

Composition is skewed to polar residues over residues 1–11 and 18–27; these read MESGAENQQSG and AESQQMTVQA. 2 disordered regions span residues 1–27 and 92–111; these read MESG…TVQA and SEDS…RREI. One can recognise a KID domain in the interval 85 to 144; the sequence is QISTIAESEDSQESVDSVTDSQKRREILSRRPSYRKILNDLSSDAPGVPRIEEEKSEEET. The residue at position 117 (serine 117) is a Phosphoserine; by CaMK1, CaMK2, CaMK4, PKB/AKT1 or PKB/AKT2, RPS6KA3, RPS6KA4, RPS6KA5 and SGK1. Lysine 120 participates in a covalent cross-link: Glycyl lysine isopeptide (Lys-Gly) (interchain with G-Cter in SUMO2). A disordered region spans residues 124–146; it reads DLSSDAPGVPRIEEEKSEEETSA. At serine 126 the chain carries Phosphoserine; by CaMK2. Serine 255 carries the phosphoserine; by HIPK2 modification. Residues 267 to 325 enclose the bZIP domain; it reads ARKREVRLMKNREAARECRRKKKEYVKCLENRVAVLENQNKTLIEELKALKDLYCHKSD. The segment at 268–293 is basic motif; the sequence is RKREVRLMKNREAARECRRKKKEYVK. Glycyl lysine isopeptide (Lys-Gly) (interchain with G-Cter in SUMO1) cross-links involve residues lysine 269 and lysine 288. The interval 295-316 is leucine-zipper; that stretch reads LENRVAVLENQNKTLIEELKAL.

The protein belongs to the bZIP family. In terms of assembly, interacts with PPRC1. Binds DNA as a dimer. This dimer is stabilized by magnesium ions. Interacts, through the bZIP domain, with the coactivators CRTC1/TORC1, CRTC2/TORC2 and CRTC3/TORC3. When phosphorylated on Ser-117, binds CREBBP. Interacts with CREBL2; regulates CREB1 phosphorylation, stability and transcriptional activity. Interacts (phosphorylated form) with TOX3. Interacts with ARRB1. Binds to HIPK2. Interacts with SGK1. Interacts with TSSK4; this interaction facilitates phosphorylation on Ser-117. Forms a complex with KMT2A and CREBBP. Interacts with TOX4; CREB1 is required for full induction of TOX4-dependent activity and the interaction is increased by cAMP and inhibited by insulin. In terms of processing, sumoylated with SUMO1. Sumoylation on Lys-288, but not on Lys-269, is required for nuclear localization of this protein. Sumoylation is enhanced under hypoxia, promoting nuclear localization and stabilization. Stimulated by phosphorylation. Phosphorylation of both Ser-117 and Ser-126 in the SCN regulates the activity of CREB and participates in circadian rhythm generation. Phosphorylation of Ser-117 allows CREBBP binding. Phosphorylated upon calcium influx by CaMK4 and CaMK2 on Ser-117. CaMK4 is much more potent than CaMK2 in activating CREB. Phosphorylated by CaMK2 on Ser-126. Phosphorylation of Ser-126 blocks CREB-mediated transcription even when Ser-117 is phosphorylated. Phosphorylated by CaMK1. Phosphorylation of Ser-255 by HIPK2 in response to genotoxic stress promotes CREB1 activity, facilitating the recruitment of the coactivator CBP. Phosphorylated at Ser-117 by RPS6KA3, RPS6KA4 and RPS6KA5 in response to mitogenic or stress stimuli. CREBL2 positively regulates phosphorylation at Ser-117 thereby stimulating CREB1 transcriptional activity. In liver, phosphorylation is induced by fasting or glucagon in a circadian fashion. Phosphorylated by TSSK4 on Ser-117.

It is found in the nucleus. In terms of biological role, phosphorylation-dependent transcription factor that stimulates transcription upon binding to the DNA cAMP response element (CRE), a sequence present in many viral and cellular promoters. Transcription activation is enhanced by the TORC coactivators which act independently of Ser-117 phosphorylation. Involved in different cellular processes including the synchronization of circadian rhythmicity and the differentiation of adipose cells. Regulates the expression of apoptotic and inflammatory response factors in cardiomyocytes in response to ERFE-mediated activation of AKT signaling. The polypeptide is Cyclic AMP-responsive element-binding protein 1 (CREB1) (Bos taurus (Bovine)).